The primary structure comprises 648 residues: Sodium/nucleoside cotransporter 1 (648 aa).

Topologically, residues 1 to 83 (MADDTPRQRE…LCREHWQLFE (83 aa)) are cytoplasmic. Residues 84-104 (WISKGLLSTAYIGFLIVACLL) form a helical membrane-spanning segment. Residues 105–108 (DFPR) are Extracellular-facing. A helical membrane pass occupies residues 109–129 (ALALFVITCVVLVFLAYNLLK). Topologically, residues 130 to 147 (RLLGSKLKKCVKFQGHSC) are cytoplasmic. The chain crosses the membrane as a helical span at residues 148-168 (LSLWLKRGLALAAGLGVILWL). Topologically, residues 169–175 (SLDTAQR) are extracellular. The helical transmembrane segment at 176-196 (PEQLVSFAGICVFLVLLFAGS) threads the bilayer. At 197–201 (KHHRA) the chain is on the cytoplasmic side. Residues 202–222 (VSWRAVSWGLGLQFVLGLFVI) form a helical membrane-spanning segment. The Extracellular portion of the chain corresponds to 223 to 265 (RTEPGFVAFQWLGDQIRVFLSYTEAGSSFVFGEALVKDVFAFQ). Residues 266–286 (VLPIIVFFSCVMSVLYYLGLM) form a helical membrane-spanning segment. Over 287–294 (QWVILKIA) the chain is Cytoplasmic. The helical transmembrane segment at 295 to 318 (WLMQVTMGTSATETLSVAGNIFVS) threads the bilayer. The Extracellular portion of the chain corresponds to 319–339 (QTEAPLLIRPYLADMTLSEVH). The helical transmembrane segment at 340-360 (VVMTGGYATIAGSLLGAYISF) threads the bilayer. Position 361 (glycine 361) is a topological domain, cytoplasmic. The chain crosses the membrane as a helical span at residues 362-380 (IDASSLIAASVMAAPCALA). The Extracellular portion of the chain corresponds to 381–427 (LSKLVYPEVEESKFRSEEGVKLTYGDAQNLVEAASAGAAISVKVVAN). The chain crosses the membrane as a helical span at residues 428–448 (IAANLIAFLAVLAFINAALSW). Topologically, residues 449–470 (LGDMVDIQGLSFQLICSYVLRP) are cytoplasmic. The helical transmembrane segment at 471-491 (VAFLMGVAWEDCPVVAELLGI) threads the bilayer. Over 492 to 531 (KLFLNEFVAYQELSQYKQRRLAGAEEWLGDKKQWISVRAE) the chain is Extracellular. Residues 532–552 (ILTTYALCGFANFSSIGIMLG) traverse the membrane as a helical segment. Residues 553–571 (GLTSMVPQRRSDFSQIVLR) lie on the Cytoplasmic side of the membrane. The chain crosses the membrane as a helical span at residues 572 to 592 (ALITGAFVSLVNACVAGILYV). Topologically, residues 593–648 (PRGVEVDCMSLLNQTVSSSSFEVYLCCRQVFQNTSLEFGQEALHNCCRFYNHTVCT) are extracellular. 3 N-linked (GlcNAc...) asparagine glycosylation sites follow: asparagine 605, asparagine 625, and asparagine 643.

It belongs to the concentrative nucleoside transporter (CNT) (TC 2.A.41) family. N-glycosylated. N-glycosylation is required for localization to the plasma membrane and the transporter activity.

Its subcellular location is the cell membrane. It is found in the apical cell membrane. It carries out the reaction uridine(out) + Na(+)(out) = uridine(in) + Na(+)(in). The enzyme catalyses thymidine(out) + Na(+)(out) = thymidine(in) + Na(+)(in). The catalysed reaction is cytidine(out) + Na(+)(out) = cytidine(in) + Na(+)(in). It catalyses the reaction adenosine(out) + Na(+)(out) = adenosine(in) + Na(+)(in). Due to its high apparent affinity but slow transport, adenosine could act as a negative regulator of pyrimidine transport under some conditions. Sodium and pyrimidine nucleoside symporter of the plasma membrane that imports uridine, thymidine and cytidine into cells by coupling their transport to the transmembrane sodium electrochemical gradient. Also transports adenosine, an atypical substrate transported with high apparent affinity, but low maximum velocity. Therefore, exhibits the transport characteristics of the nucleoside transport system cit or N2 subtype (N2/cit). Involved in renal nucleoside (re)absorption. This chain is Sodium/nucleoside cotransporter 1, found in Mus musculus (Mouse).